The sequence spans 1288 residues: Mitogen-activated protein kinase kinase kinase 6 (1288 aa).

Residues 648–906 enclose the Protein kinase domain; that stretch reads TGERLVLGKG…AQTLLGDPFL (259 aa). ATP contacts are provided by residues 654 to 662 and K677; that span reads LGKGTYGVV. The active-site Proton acceptor is D771. T806 is modified (phosphothreonine). A disordered region spans residues 899–997; sequence TLLGDPFLQP…SSGLSLLHQE (99 aa). The segment covering 914–952 has biased composition (low complexity); it reads SPSSPRHAPRPSDAPSASPTPSANSTTQSQTFPCPQAPS. A phosphoserine mark is found at S964 and S984. The segment covering 980-989 has biased composition (low complexity); it reads EEPASPEESS. A coiled-coil region spans residues 1004-1029; sequence LAAVLEQELPALAENLHQEQKQEQGA. The span at 1123–1134 shows a compositional bias: basic and acidic residues; sequence VEKEAVSPRSEE. A disordered region spans residues 1123–1157; the sequence is VEKEAVSPRSEELSNEGDSQQSPGQQSPLPVEPEQ. Residues S1129 and S1149 each carry the phosphoserine modification. Residues 1141–1151 show a composition bias toward low complexity; it reads SQQSPGQQSPL. The stretch at 1166 to 1205 forms a coiled coil; that stretch reads LSLLRAETDRLREILAGKEREYQALVQRALQRLNEEARTY.

This sequence belongs to the protein kinase superfamily. STE Ser/Thr protein kinase family. MAP kinase kinase kinase subfamily. In terms of assembly, binds both upstream activators and downstream substrates in multimolecular complexes. Mg(2+) is required as a cofactor.

The enzyme catalyses L-seryl-[protein] + ATP = O-phospho-L-seryl-[protein] + ADP + H(+). It catalyses the reaction L-threonyl-[protein] + ATP = O-phospho-L-threonyl-[protein] + ADP + H(+). Activated by phosphorylation on Thr-806. Catalytically active only when complexed with MAP3K5, with MAP3K5 supporting the stability and the active configuration of MAP3K6 and MAP3K6 activating MAP3K5 by direct phosphorylation. In terms of biological role, component of a protein kinase signal transduction cascade. Activates the JNK, but not ERK or p38 kinase pathways. The sequence is that of Mitogen-activated protein kinase kinase kinase 6 (MAP3K6) from Homo sapiens (Human).